We begin with the raw amino-acid sequence, 92 residues long: Small ribosomal subunit protein uS19 (92 aa).

This sequence belongs to the universal ribosomal protein uS19 family.

Protein S19 forms a complex with S13 that binds strongly to the 16S ribosomal RNA. This is Small ribosomal subunit protein uS19 from Vibrio campbellii (strain ATCC BAA-1116).